The chain runs to 457 residues: Proton extrusion protein PxcA (457 aa).

Transmembrane regions (helical) follow at residues 239–259, 332–352, 368–390, and 417–437; these read FILLLIIVPLLTHQLTKTFFL, INAISNVFADIFSLIAFGVVI, GILYSLSDSAKAFLIILFTDMFV, and FNFLFIATFPVILDTVLKYWI.

Belongs to the CemA family.

Its subcellular location is the cell inner membrane. Functionally, required for H(+) efflux immediately after light irradiation to form a rapid H(+) concentration gradient across the thylakoid membranes. Together with PxcL, contributes to transient H(+) uptake following dark to light transition. This is Proton extrusion protein PxcA from Gloeothece citriformis (strain PCC 7424) (Cyanothece sp. (strain PCC 7424)).